Consider the following 125-residue polypeptide: Unclassified hydrophobin 8 (125 aa).

Residues 1–20 (MMFSKPVVLATTALATFAAA) form the signal peptide. 4 cysteine pairs are disulfide-bonded: Cys-31/Cys-105, Cys-38/Cys-99, Cys-39/Cys-90, and Cys-106/Cys-119.

The protein belongs to the fungal hydrophobin family. As to quaternary structure, self-assembles to form functional amyloid fibrils called rodlets. Self-assembly into fibrillar rodlets occurs spontaneously at hydrophobic:hydrophilic interfaces and the rodlets further associate laterally to form amphipathic monolayers.

The protein resides in the secreted. Its subcellular location is the cell wall. Functionally, aerial growth, conidiation, and dispersal of filamentous fungi in the environment rely upon a capability of their secreting small amphipathic proteins called hydrophobins (HPBs) with low sequence identity. Class I can self-assemble into an outermost layer of rodlet bundles on aerial cell surfaces, conferring cellular hydrophobicity that supports fungal growth, development and dispersal; whereas Class II form highly ordered films at water-air interfaces through intermolecular interactions but contribute nothing to the rodlet structure. Hydph8 is an unclassified hydrophobin involved in mycelial growth. This chain is Unclassified hydrophobin 8, found in Pleurotus ostreatus (strain PC15) (Oyster mushroom).